Here is a 315-residue protein sequence, read N- to C-terminus: Mitochondrial glycine transporter (315 aa).

Solcar repeat units lie at residues 19–102 (SKTT…LRTG), 125–206 (TANL…LKRR), and 221–305 (KSSS…LILR). Helical transmembrane passes span 25–50 (FTAG…TRVQ), 77–103 (GTLP…RTGL), 128–153 (LATG…VRYE), 181–204 (GFGA…EQLK), 225–251 (INFV…KTRL), and 280–298 (GLGL…AWTV).

This sequence belongs to the mitochondrial carrier (TC 2.A.29) family. SLC25A38 subfamily.

It localises to the mitochondrion inner membrane. The enzyme catalyses glycine(in) = glycine(out). Functionally, mitochondrial glycine transporter that imports glycine into the mitochondrial matrix. Plays an important role in providing glycine for the first enzymatic step in heme biosynthesis, the condensation of glycine with succinyl-CoA to produce 5-aminolevulinate (ALA) in the mitochondrial matrix. The chain is Mitochondrial glycine transporter from Aspergillus niger (strain ATCC MYA-4892 / CBS 513.88 / FGSC A1513).